The chain runs to 1482 residues: Chromosome partition protein MukB (1482 aa).

34–41 (GGNGAGKS) is a binding site for ATP. Coiled coils occupy residues 326-416 (LEAD…AIQY), 509-603 (RHLA…RAPV), 780-805 (RAAR…ATLS), 835-923 (EAEI…AKLE), 979-1116 (LSGN…AKAG), and 1210-1265 (EAIE…LQSV). A flexible hinge region spans residues 666-783 (PGGAEDSRLN…TLPLFGRAAR (118 aa)).

The protein belongs to the SMC family. MukB subfamily. In terms of assembly, homodimerization via its hinge domain. Binds to DNA via its C-terminal region. Interacts, and probably forms a ternary complex, with MukE and MukF via its C-terminal region. The complex formation is stimulated by calcium or magnesium. Interacts with tubulin-related protein FtsZ.

The protein resides in the cytoplasm. Its subcellular location is the nucleoid. Functionally, plays a central role in chromosome condensation, segregation and cell cycle progression. Functions as a homodimer, which is essential for chromosome partition. Involved in negative DNA supercoiling in vivo, and by this means organize and compact chromosomes. May achieve or facilitate chromosome segregation by condensation DNA from both sides of a centrally located replisome during cell division. The protein is Chromosome partition protein MukB of Enterobacter sp. (strain 638).